The primary structure comprises 459 residues: Hemopexin (459 aa).

The N-terminal stretch at 1-23 (MARALRVPVALWLLGLCWSLAKA) is a signal peptide. 3 cysteine pairs are disulfide-bonded: Cys52–Cys232, Cys150–Cys155, and Cys189–Cys201. Hemopexin repeat units follow at residues 55–95 (GWGF…WKDA), 96–140 (PSPV…FPGI), 141–185 (PFPL…SWPA), and 186–232 (VGNC…FMSC). His81 is a binding site for heme. A heme-binding site is contributed by His151. A glycan (N-linked (GlcNAc...) asparagine) is linked at Asn188. A glycan (N-linked (GlcNAc...) asparagine) is linked at Asn218. His237 contacts heme. An N-linked (GlcNAc...) asparagine glycan is attached at Asn241. 3 cysteine pairs are disulfide-bonded: Cys250-Cys453, Cys359-Cys401, and Cys411-Cys428. 4 Hemopexin repeats span residues 252–297 (PHLV…WPQG), 298–345 (PSTV…FGSP), 350–389 (LHSV…WTEL), and 393–444 (HTKV…LPQA). His286 contributes to the heme binding site.

It belongs to the hemopexin family.

Its subcellular location is the secreted. Functionally, binds heme and transports it to the liver for breakdown and iron recovery, after which the free hemopexin returns to the circulation. This is Hemopexin (HPX) from Bos taurus (Bovine).